The following is a 372-amino-acid chain: DNA replication and repair protein RecF (372 aa).

30–37 (GENAQGKT) serves as a coordination point for ATP.

It belongs to the RecF family.

The protein resides in the cytoplasm. The RecF protein is involved in DNA metabolism; it is required for DNA replication and normal SOS inducibility. RecF binds preferentially to single-stranded, linear DNA. It also seems to bind ATP. The chain is DNA replication and repair protein RecF from Geobacillus kaustophilus (strain HTA426).